Consider the following 119-residue polypeptide: Small ribosomal subunit protein bS16 (119 aa).

Belongs to the bacterial ribosomal protein bS16 family.

This is Small ribosomal subunit protein bS16 from Chlamydia caviae (strain ATCC VR-813 / DSM 19441 / 03DC25 / GPIC) (Chlamydophila caviae).